The sequence spans 189 residues: Interferon alpha-1 (189 aa).

The first 23 residues, 1–23, serve as a signal peptide directing secretion; that stretch reads MARLCAFLMVLAVLSYWPTCSLG. 2 disulfide bridges follow: C24-C122 and C52-C162. N-linked (GlcNAc...) asparagine glycosylation occurs at N101.

The protein belongs to the alpha/beta interferon family. As to quaternary structure, interacts with CR2. Glycosylated.

Its subcellular location is the secreted. Produced by macrophages, IFN-alpha have antiviral activities. Interferon stimulates the production of two enzymes: a protein kinase and an oligoadenylate synthetase. The chain is Interferon alpha-1 (Ifna1) from Mus musculus (Mouse).